A 473-amino-acid polypeptide reads, in one-letter code: Serine palmitoyltransferase 1 (473 aa).

Residues 1–15 (MATVAEQWVLVEMVQ) are Lumenal-facing. The interaction with SPTLC2 stretch occupies residues 1 to 66 (MATVAEQWVL…KEELIEEWQP (66 aa)). The chain crosses the membrane as a helical span at residues 16 to 36 (ALYEAPAYHLILEGILILWII). Residues 37-473 (RLVFSKTYKL…IREAAQAVLL (437 aa)) lie on the Cytoplasmic side of the membrane. Position 164 is a phosphotyrosine; by ABL (tyrosine 164).

It belongs to the class-II pyridoxal-phosphate-dependent aminotransferase family. Component of the serine palmitoyltransferase (SPT) complex, which is also composed of SPTLC2 or SPTLC3 and SPTSSA or SPTSSB. The heterodimer with SPTLC2 or SPTLC3 forms the catalytic core of the enzyme, while SPTSSA or SPTSSB subunits determine substrate specificity. SPT also interacts with ORMDL proteins, especially ORMDL3, which negatively regulate SPT activity in the presence of ceramides. Forms dimers of heterodimers with SPTLC2. Interacts with RTN4 (isoform B). The cofactor is pyridoxal 5'-phosphate. In terms of processing, phosphorylation at Tyr-164 inhibits activity and promotes cell survival. As to expression, expressed in a variety of tissues. Highest expression in brain, kidney and liver. Expressed in brown and white adipose tissues.

It localises to the endoplasmic reticulum membrane. It catalyses the reaction L-serine + hexadecanoyl-CoA + H(+) = 3-oxosphinganine + CO2 + CoA. The enzyme catalyses octadecanoyl-CoA + L-serine + H(+) = 3-oxoeicosasphinganine + CO2 + CoA. The catalysed reaction is tetradecanoyl-CoA + L-serine + H(+) = 3-oxohexadecasphinganine + CO2 + CoA. It carries out the reaction dodecanoyl-CoA + L-serine + H(+) = 3-oxotetradecasphinganine + CO2 + CoA. It participates in lipid metabolism; sphingolipid metabolism. Its activity is regulated as follows. SPT complex catalytic activity is negatively regulated by ORMDL proteins, including ORMDL3, in the presence of ceramides. This mechanism allows to maintain ceramide levels at sufficient concentrations for the production of complex sphingolipids, but which prevents the accumulation of ceramides to levels that trigger apoptosis. Its function is as follows. Component of the serine palmitoyltransferase multisubunit enzyme (SPT) that catalyzes the initial and rate-limiting step in sphingolipid biosynthesis by condensing L-serine and activated acyl-CoA (most commonly palmitoyl-CoA) to form long-chain bases. The SPT complex is also composed of SPTLC2 or SPTLC3 and SPTSSA or SPTSSB. Within this complex, the heterodimer with SPTLC2 or SPTLC3 forms the catalytic core. The composition of the serine palmitoyltransferase (SPT) complex determines the substrate preference. The SPTLC1-SPTLC2-SPTSSA complex shows a strong preference for C16-CoA substrate, while the SPTLC1-SPTLC3-SPTSSA isozyme uses both C14-CoA and C16-CoA as substrates, with a slight preference for C14-CoA. The SPTLC1-SPTLC2-SPTSSB complex shows a strong preference for C18-CoA substrate, while the SPTLC1-SPTLC3-SPTSSB isozyme displays an ability to use a broader range of acyl-CoAs, without apparent preference. Required for adipocyte cell viability and metabolic homeostasis. In Mus musculus (Mouse), this protein is Serine palmitoyltransferase 1 (Sptlc1).